Reading from the N-terminus, the 102-residue chain is Large ribosomal subunit protein uL24 (102 aa).

It belongs to the universal ribosomal protein uL24 family. In terms of assembly, part of the 50S ribosomal subunit.

Its function is as follows. One of two assembly initiator proteins, it binds directly to the 5'-end of the 23S rRNA, where it nucleates assembly of the 50S subunit. One of the proteins that surrounds the polypeptide exit tunnel on the outside of the subunit. The protein is Large ribosomal subunit protein uL24 of Burkholderia mallei (strain NCTC 10229).